Here is a 761-residue protein sequence, read N- to C-terminus: Translation initiation factor IF-2 (761 aa).

The tract at residues 39 to 179 (DEETLNKAKQ…KVNHQQMPLP (141 aa)) is disordered. Positions 45 to 105 (KAKQAGKPAA…NNQQSQSQGQ (61 aa)) are enriched in low complexity. Residues 106–120 (TKRPSQASNNQSGAA) show a composition bias toward polar residues. Low complexity predominate over residues 142–154 (PGSNNRRPGNNQN). Residues 155–168 (RRNHGNRGGKRRPQ) show a composition bias toward basic residues. Residues 262–435 (ERPPVVTIMG…EVEEFKANPD (174 aa)) enclose the tr-type G domain. The interval 271–278 (GHVDHGKT) is G1. GTP is bound at residue 271 to 278 (GHVDHGKT). Residues 296-300 (GITQH) are G2. The segment at 317 to 320 (DTPG) is G3. Residues 317 to 321 (DTPGH) and 371 to 374 (NKID) contribute to the GTP site. The G4 stretch occupies residues 371-374 (NKID). The G5 stretch occupies residues 407-409 (SAL).

This sequence belongs to the TRAFAC class translation factor GTPase superfamily. Classic translation factor GTPase family. IF-2 subfamily.

It is found in the cytoplasm. One of the essential components for the initiation of protein synthesis. Protects formylmethionyl-tRNA from spontaneous hydrolysis and promotes its binding to the 30S ribosomal subunits. Also involved in the hydrolysis of GTP during the formation of the 70S ribosomal complex. In Shouchella clausii (strain KSM-K16) (Alkalihalobacillus clausii), this protein is Translation initiation factor IF-2.